Reading from the N-terminus, the 91-residue chain is Small ribosomal subunit protein uS15c (91 aa).

It belongs to the universal ribosomal protein uS15 family. Part of the 30S ribosomal subunit.

Its subcellular location is the plastid. The protein localises to the chloroplast. This Eucalyptus globulus subsp. globulus (Tasmanian blue gum) protein is Small ribosomal subunit protein uS15c (rps15).